A 118-amino-acid chain; its full sequence is Small ribosomal subunit protein uS13 (118 aa).

The tract at residues 93–118 is disordered; that stretch reads RGLPVRGQRTKTNARTRKGPRKPIRK.

Belongs to the universal ribosomal protein uS13 family. In terms of assembly, part of the 30S ribosomal subunit. Forms a loose heterodimer with protein S19. Forms two bridges to the 50S subunit in the 70S ribosome.

Its function is as follows. Located at the top of the head of the 30S subunit, it contacts several helices of the 16S rRNA. In the 70S ribosome it contacts the 23S rRNA (bridge B1a) and protein L5 of the 50S subunit (bridge B1b), connecting the 2 subunits; these bridges are implicated in subunit movement. Contacts the tRNAs in the A and P-sites. This Azotobacter vinelandii (strain DJ / ATCC BAA-1303) protein is Small ribosomal subunit protein uS13.